The sequence spans 89 residues: Small ribosomal subunit protein uS15 (89 aa).

The protein belongs to the universal ribosomal protein uS15 family. As to quaternary structure, part of the 30S ribosomal subunit. Forms a bridge to the 50S subunit in the 70S ribosome, contacting the 23S rRNA.

Its function is as follows. One of the primary rRNA binding proteins, it binds directly to 16S rRNA where it helps nucleate assembly of the platform of the 30S subunit by binding and bridging several RNA helices of the 16S rRNA. Functionally, forms an intersubunit bridge (bridge B4) with the 23S rRNA of the 50S subunit in the ribosome. The sequence is that of Small ribosomal subunit protein uS15 from Limosilactobacillus reuteri (strain DSM 20016) (Lactobacillus reuteri).